The following is a 208-amino-acid chain: Superoxide dismutase [Mn] 2 (208 aa).

Mn(2+) is bound by residues His28, His83, Asp165, and His169.

The protein belongs to the iron/manganese superoxide dismutase family. In terms of assembly, homodimer. Requires Mn(2+) as cofactor.

It carries out the reaction 2 superoxide + 2 H(+) = H2O2 + O2. In terms of biological role, destroys superoxide anion radicals which are normally produced within the cells and which are toxic to biological systems. The sequence is that of Superoxide dismutase [Mn] 2 (sodA2) from Bacillus anthracis.